Consider the following 251-residue polypeptide: Small ribosomal subunit protein uS2 (251 aa).

Belongs to the universal ribosomal protein uS2 family.

The chain is Small ribosomal subunit protein uS2 from Nitrosomonas europaea (strain ATCC 19718 / CIP 103999 / KCTC 2705 / NBRC 14298).